The primary structure comprises 141 residues: Hemoglobin subunit alpha (141 aa).

Positions 1–141 (VLSPADKTNL…VSTVLTSKYR (141 aa)) constitute a Globin domain. Ser3 carries the phosphoserine modification. Lys7 bears the N6-succinyllysine mark. At Thr8 the chain carries Phosphothreonine. Lys11 is subject to N6-succinyllysine. Lys16 carries the N6-acetyllysine; alternate modification. The residue at position 16 (Lys16) is an N6-succinyllysine; alternate. Tyr24 bears the Phosphotyrosine mark. Residue Lys40 is modified to N6-succinyllysine. Residue Ser49 is modified to Phosphoserine. His58 is a binding site for O2. Residue His87 coordinates heme b. Ser102 is modified (phosphoserine). Thr108 carries the post-translational modification Phosphothreonine. Ser124 carries the post-translational modification Phosphoserine. Phosphothreonine occurs at positions 134 and 137. Residue Ser138 is modified to Phosphoserine.

The protein belongs to the globin family. Heterotetramer of two alpha chains and two beta chains. Red blood cells.

In terms of biological role, involved in oxygen transport from the lung to the various peripheral tissues. This is Hemoglobin subunit alpha from Tamias striatus (Eastern chipmunk).